Consider the following 448-residue polypeptide: Probable glycine dehydrogenase (decarboxylating) subunit 1 (448 aa).

The protein belongs to the GcvP family. N-terminal subunit subfamily. In terms of assembly, the glycine cleavage system is composed of four proteins: P, T, L and H. In this organism, the P 'protein' is a heterodimer of two subunits.

The enzyme catalyses N(6)-[(R)-lipoyl]-L-lysyl-[glycine-cleavage complex H protein] + glycine + H(+) = N(6)-[(R)-S(8)-aminomethyldihydrolipoyl]-L-lysyl-[glycine-cleavage complex H protein] + CO2. Its function is as follows. The glycine cleavage system catalyzes the degradation of glycine. The P protein binds the alpha-amino group of glycine through its pyridoxal phosphate cofactor; CO(2) is released and the remaining methylamine moiety is then transferred to the lipoamide cofactor of the H protein. The polypeptide is Probable glycine dehydrogenase (decarboxylating) subunit 1 (Listeria welshimeri serovar 6b (strain ATCC 35897 / DSM 20650 / CCUG 15529 / CIP 8149 / NCTC 11857 / SLCC 5334 / V8)).